Consider the following 276-residue polypeptide: MSRIAATFARLRDEGRAGLIPFVEAFDPDRETSATLLAGMAARGADLIEIGMPFTDPMADGPTIQQAGRRALRAGATLAGTLGLVRDFRAVNDTVPLILMGYLNPILSYGVERFTADAAAAGVDGVIVVDLPTEEADLLLPHLRQHRIDLIRLVAPTTTDERLPVVLNDSSGFVYYVSITGITGTRTASAEDLARDIPRVRKATDMPIAVGFGVRTPAQAATVARFADAAVVASALIDKLAAGLDADGKAPPAIVEAVLDDVAALAAAVRGERRAA.

Residues glutamate 49 and aspartate 60 each act as proton acceptor in the active site.

The protein belongs to the TrpA family. As to quaternary structure, tetramer of two alpha and two beta chains.

It catalyses the reaction (1S,2R)-1-C-(indol-3-yl)glycerol 3-phosphate + L-serine = D-glyceraldehyde 3-phosphate + L-tryptophan + H2O. Its pathway is amino-acid biosynthesis; L-tryptophan biosynthesis; L-tryptophan from chorismate: step 5/5. Functionally, the alpha subunit is responsible for the aldol cleavage of indoleglycerol phosphate to indole and glyceraldehyde 3-phosphate. The chain is Tryptophan synthase alpha chain from Acidiphilium cryptum (strain JF-5).